The chain runs to 299 residues: Protease HtpX homolog (299 aa).

Transmembrane regions (helical) follow at residues 19 to 39 (LFIVLFSLILFAVGYFFVWYF) and 41 to 61 (WGITGIIFLAIFIVLYNWIAY). Residue H146 coordinates Zn(2+). Residue E147 is part of the active site. H150 lines the Zn(2+) pocket. Helical transmembrane passes span 156–176 (ILLMTVVAIVAGLIILLRDVF) and 198–218 (IILLLIGLILSIIAPIVVLII). Residue E227 coordinates Zn(2+).

Belongs to the peptidase M48B family. Zn(2+) serves as cofactor.

Its subcellular location is the cell membrane. The sequence is that of Protease HtpX homolog from Caldanaerobacter subterraneus subsp. tengcongensis (strain DSM 15242 / JCM 11007 / NBRC 100824 / MB4) (Thermoanaerobacter tengcongensis).